A 168-amino-acid chain; its full sequence is CDP-archaeol synthase (168 aa).

5 helical membrane-spanning segments follow: residues 7-27 (PLESILAIIPALAANGAPVLL), 55-75 (GLATGILYGSVIALLAASATC), 80-100 (YAAGVFASIGAMLGDMLGAFI), 109-129 (GAPAPLLDQLDFYSGALLALY), and 130-150 (AAGYVVHPAVALTFTPIVIAL).

The protein belongs to the CDP-archaeol synthase family. It depends on Mg(2+) as a cofactor.

It is found in the cell membrane. It carries out the reaction 2,3-bis-O-(geranylgeranyl)-sn-glycerol 1-phosphate + CTP + H(+) = CDP-2,3-bis-O-(geranylgeranyl)-sn-glycerol + diphosphate. It participates in membrane lipid metabolism; glycerophospholipid metabolism. In terms of biological role, catalyzes the formation of CDP-2,3-bis-(O-geranylgeranyl)-sn-glycerol (CDP-archaeol) from 2,3-bis-(O-geranylgeranyl)-sn-glycerol 1-phosphate (DGGGP) and CTP. This reaction is the third ether-bond-formation step in the biosynthesis of archaeal membrane lipids. In Hyperthermus butylicus (strain DSM 5456 / JCM 9403 / PLM1-5), this protein is CDP-archaeol synthase.